The chain runs to 677 residues: Envelope glycoprotein (677 aa).

The first 33 residues, 1–33 (MGSGYQLLQLPRERFRKTSFLVWVIILFQRAIS), serve as a signal peptide directing secretion. The Extracellular portion of the chain corresponds to 34-651 (MPLGIVTNST…DLNLWTGWRQ (618 aa)). A glycan (N-linked (GlcNAc...) asparagine; by host) is linked at N41. 5 disulfide bridges follow: C54–C610, C109–C136, C122–C148, C512–C557, and C602–C609. Residues 55 to 202 (RDKLSSTSQL…HFWKATPAHE (148 aa)) form a receptor-binding region. N205, N239, N258, N269, N297, N317, N318, N339, N406, N420, N435, and N463 each carry an N-linked (GlcNAc...) asparagine; by host glycan. The tract at residues 306–486 (NLHFQILSTH…PSQPGLTINT (181 aa)) is mucin-like region. The segment covering 315-326 (HTNNSSDQSPAG) has biased composition (polar residues). Disordered stretches follow at residues 315 to 349 (HTNN…TDSP), 370 to 483 (NGET…PGLT), and 489 to 508 (KVAD…RQNT). 3 stretches are compositionally biased toward polar residues: residues 370-421 (NGET…ASNE), 428-445 (MNSI…QTKA), and 458-472 (PQET…TSPG). Residues 525 to 540 (GAAAGLAWIPYFGPAA) form a fusion peptide region. Residues 555 to 596 (LICGLRQLANETTQALQLFLRATTELRTYSLLNRKAIDFLLQ) adopt a coiled-coil conformation. The N-linked (GlcNAc...) asparagine; by host glycan is linked to N564. Residues 616–635 (WTKNITDEINQIKHDFIDNP) adopt a coiled-coil conformation. Residue N619 is glycosylated (N-linked (GlcNAc...) asparagine; by host). Residues 652–672 (WIPAGIGIIGVIIAIIALLCI) traverse the membrane as a helical segment. Residues C671 and C673 are each lipidated (S-palmitoyl cysteine; by host). Over 673–677 (CKILC) the chain is Cytoplasmic.

This sequence belongs to the filoviruses glycoprotein family. As to quaternary structure, homotrimer; each monomer consists of a GP1 and a GP2 subunit linked by disulfide bonds. The resulting peplomers (GP1,2) protrude from the virus surface as spikes. Interacts with host integrin alpha-V/ITGAV. Interacts with host CLEC10A. Binds also to host CD209 and CLEC4M/DC-SIGN(R). Interacts with host FOLR1. Interacts with BST2; this interaction inhibits the antiviral effect of BST2 and this allows viral release from infected cells. Interacts with host FCN1; this interaction enhances viral entry. Interacts with host TLR4; this interaction induces cell death in T-lymphocytes or proinflammatory cytokines and SOCS1 production in monocytes. Interacts with host entry receptor NPC1. In terms of assembly, GP1 and GP2delta are part of GP1,2delta soluble complexes released by ectodomain shedding. The signal peptide region modulates GP's high mannose glycosylation, thereby determining the efficiency of the interactions with DC-SIGN(R). Post-translationally, N-glycosylated. In terms of processing, O-glycosylated in the mucin-like region. Palmitoylation of GP2 is not required for its function. Post-translationally, specific enzymatic cleavages in vivo yield mature proteins. The precursor is processed into GP1 and GP2 by host cell furin in the trans Golgi, and maybe by other host proteases, to yield the mature GP1 and GP2 proteins. The cleavage site corresponds to the furin optimal cleavage sequence [KR]-X-[KR]-R. This cleavage does not seem to be required for function. After the internalization of the virus into cell endosomes, GP1 C-terminus is removed by the endosomal proteases cathepsin B, cathepsin L, or both, leaving a 19-kDa N-terminal fragment which is further digested by cathepsin B. Proteolytic processing of GP1,2 by host ADAM17 can remove the transmembrane anchor of GP2 and leads to shedding of complexes consisting in GP1 and truncated GP2 (GP1,2delta).

It localises to the virion membrane. The protein localises to the host cell membrane. Its subcellular location is the secreted. Functionally, trimeric GP1,2 complexes form the virion surface spikes and mediate the viral entry processes, with GP1 acting as the receptor-binding subunit and GP2 as the membrane fusion subunit. At later times of infection, down-regulates the expression of various host cell surface molecules that are essential for immune surveillance and cell adhesion. Down-modulates several integrins including ITGA1, ITGA2, ITGA3, ITGA4, ITGA5, ITGA6, ITGAV and ITGB1. This decrease in cell adhesion molecules may lead to cell detachment, contributing to the disruption of blood vessel integrity and hemorrhages developed during infection (cytotoxicity). Interacts with host TLR4 and thereby stimulates the differentiation and activation of monocytes leading to bystander death of T-lymphocytes. Down-regulates as well the function of host natural killer cells. Counteracts the antiviral effect of host BST2/tetherin that restricts release of progeny virions from infected cells. However, cooperates with VP40 and host BST2 to activate canonical NF-kappa-B pathway in a manner dependent on neddylation. In terms of biological role, functions as a decoy for anti-GP1,2 antibodies thereby contributing to viral immune evasion. Interacts and activates host macrophages and dendritic cells inducing up-regulation of cytokine transcription. This effect is mediated throught activation of host TLR4. Its function is as follows. Responsible for binding to the receptor(s) on target cells. Interacts with CD209/DC-SIGN and CLEC4M/DC-SIGNR which act as cofactors for virus entry into dendritic cells (DCs) and endothelial cells. Binding to the macrophage specific lectin CLEC10A also seems to enhance virus infectivity. Interaction with FOLR1/folate receptor alpha may be a cofactor for virus entry in some cell types, although results are contradictory. Members of the Tyro3 receptor tyrosine kinase family also seem to be cell entry factors in filovirus infection. Once attached, the virions are internalized through clathrin-dependent endocytosis and/or macropinocytosis. After internalization of the virus into the endosomes of the host cell, proteolysis of GP1 by two cysteine proteases, CTSB/cathepsin B and CTSL/cathepsin L removes the glycan cap and allows GP1 binding to the host entry receptor NPC1. NPC1-binding, Ca(2+) and acidic pH induce a conformational change of GP2, which unmasks its fusion peptide and permit membranes fusion. Acts as a class I viral fusion protein. Under the current model, the protein has at least 3 conformational states: pre-fusion native state, pre-hairpin intermediate state, and post-fusion hairpin state. During viral and target cell membrane fusion, the coiled coil regions (heptad repeats) assume a trimer-of-hairpins structure, positioning the fusion peptide in close proximity to the C-terminal region of the ectodomain. The formation of this structure appears to drive apposition and subsequent fusion of viral and target cell membranes. Responsible for penetration of the virus into the cell cytoplasm by mediating the fusion of the membrane of the endocytosed virus particle with the endosomal membrane. Low pH in endosomes induces an irreversible conformational change in GP2, releasing the fusion hydrophobic peptide. The sequence is that of Envelope glycoprotein (GP) from Reston ebolavirus (strain Philippines-96) (REBOV).